The sequence spans 683 residues: MLACLTRGNLLDVLQEGFNEQQLQAYVAWVNAQLKKRPAVKPVQDLRQDLRDGVILAYLIEIVAGEKLSGVQLSPGNQQEMKNNVEKVLQFVASKKIRMHQTSAKDIVDGNLKSIMRLVLALAAHFKPGSSRTVNQGRDSRAPLQSHRPHCATAVAQGAAAALADVCHDMSRSGRDVFRYRQRNSSMDEEIENPYWSVRALVQQYEGQQRSPSESSCSSLTSPSPIHSAKSESIITQSEEKADFVIIPAEGIENRTEGTDSPLSRDWRPGSPGTYLETSWEEQLLEQQEYLEKEMEEAKKMISGLQALLLNGSLPEDEQERPLALCEPGVNPEEQLIIIQSRLDQSMEENQDLKKELLKCKQEARNLQGIKDALQQRLTQQDTSVLQLKQELLRANMDKDELHNQNVDLQRKLDERNRLLGEYKKELGQKDRLLQQHQAKLEEALRKLSDVSYHQVDLERELEHKDVLLAHCMKREADEATNYNSHNSQSNGFLLPTAGKGATSVSNRGTSDLQLVRDALRSLRNSFSGHDPQHHTIDSLEQGISSLMERLHVMETQKKQERKVRVKSPRTQVGSEYRESWPPNSKLPHSQSSPTVSSTCTKVLYFTDRSLTPFMVNIPKRLEEVTLKDFKAAIDREGNHRYHFKALDPEFGTVKEEIFHDDDAIPGWEGKIVAWVEEDHGEN.

Residue Leu2 is the site of N-myristoyl glycine attachment. Positions 20–127 (EQQLQAYVAW…LVLALAAHFK (108 aa)) constitute a Calponin-homology (CH) domain. The actin-binding stretch occupies residues 127 to 300 (KPGSSRTVNQ…LEKEMEEAKK (174 aa)). At Ser186 the chain carries Phosphoserine. Residues 207-235 (GQQRSPSESSCSSLTSPSPIHSAKSESII) are disordered. Low complexity predominate over residues 211–228 (SPSESSCSSLTSPSPIHS). Position 231 is a phosphoserine (Ser231). A coiled-coil region spans residues 279–452 (SWEEQLLEQQ…EALRKLSDVS (174 aa)). The segment covering 482–492 (NYNSHNSQSNG) has biased composition (polar residues). 2 disordered regions span residues 482 to 509 (NYNSHNSQSNGFLLPTAGKGATSVSNRG) and 556 to 594 (TQKKQERKVRVKSPRTQVGSEYRESWPPNSKLPHSQSSP). The residue at position 590 (Ser590) is a Phosphoserine. The 81-residue stretch at 600-680 (CTKVLYFTDR…KIVAWVEEDH (81 aa)) folds into the DIX domain.

Belongs to the DIXDC1 family. As to quaternary structure, isoform 1 but not isoform 2 binds filamentous actin. Interacts with the complex composed of DVL2 and Rac. Interacts with AXIN1; competes with MAP3K1. Interacts with MAP3K4 preventing MAP3K4 interaction with AXIN1. Directly interacts (via DIX domain) with DVL2 (via DIX domain). Interacts with gamma-tubulin. Post-translationally, phosphorylated on tyrosine and serine residues. Polyubiquitinated, leading to its proteasomal degradation. WNT3A signaling increases DIXDC1 protein levels by inhibiting its ubiquitination and subsequent degradation. As to expression, ubiquitously expressed with higher expression in cardiac and skeletal muscles.

It localises to the cell junction. The protein resides in the focal adhesion. It is found in the cytoplasm. The protein localises to the cytoskeleton. Its subcellular location is the stress fiber. In terms of biological role, positive effector of the Wnt signaling pathway; activates WNT3A signaling via DVL2. Regulates JNK activation by AXIN1 and DVL2. The sequence is that of Dixin (DIXDC1) from Homo sapiens (Human).